A 173-amino-acid polypeptide reads, in one-letter code: Alpha-crystallin A chain (173 aa).

Met1 carries the post-translational modification N-acetylmethionine. Positions 1–63 (MDITIQHPWF…RTVLESGISE (63 aa)) are required for complex formation with BFSP1 and BFSP2. At Gln6 the chain carries Deamidated glutamine; partial. The residue at position 45 (Ser45) is a Phosphoserine. Gln50 is modified (deamidated glutamine; partial). The sHSP domain occupies 52–164 (LFRTVLESGI…SDRSIPVSRE (113 aa)). The residue at position 99 (Lys99) is an N6-acetyllysine. The Zn(2+) site is built by His100, Glu102, and His107. Ser122 is modified (phosphoserine). The residue at position 123 (Asn123) is a Deamidated asparagine; partial. A disordered region spans residues 144–173 (PKIHSNMESSHSDRSIPVSREEKPTLAPSS). Over residues 153-167 (SHSDRSIPVSREEKP) the composition is skewed to basic and acidic residues. His154 serves as a coordination point for Zn(2+). Ser162 is a glycosylation site (O-linked (GlcNAc) serine).

This sequence belongs to the small heat shock protein (HSP20) family. As to quaternary structure, heteromer composed of three CRYAA and one CRYAB subunits. Inter-subunit bridging via zinc ions enhances stability, which is crucial as there is no protein turn over in the lens. Can also form homodimers and homotetramers (dimers of dimers) which serve as the building blocks of homooligomers. Within homooligomers, the zinc-binding motif is created from residues of 3 different molecules. His-100 and Glu-102 from one molecule are ligands of the zinc ion, and His-107 and His-154 residues from additional molecules complete the site with tetrahedral coordination geometry. Part of a complex required for lens intermediate filament formation composed of BFSP1, BFSP2 and CRYAA. Acetylation at Lys-99 may increase chaperone activity. In terms of processing, undergoes age-dependent proteolytical cleavage at the C-terminus.

It is found in the cytoplasm. It localises to the nucleus. In terms of biological role, contributes to the transparency and refractive index of the lens. Acts as a chaperone, preventing aggregation of various proteins under a wide range of stress conditions. Required for the correct formation of lens intermediate filaments as part of a complex composed of BFSP1, BFSP2 and CRYAA. The polypeptide is Alpha-crystallin A chain (CRYAA) (Didelphis virginiana (North American opossum)).